The primary structure comprises 61 residues: Large ribosomal subunit protein eL20 (61 aa).

This sequence belongs to the eukaryotic ribosomal protein eL20 family. Part of the 50S ribosomal subunit. Binds 23S rRNA.

This is Large ribosomal subunit protein eL20 from Methanosarcina acetivorans (strain ATCC 35395 / DSM 2834 / JCM 12185 / C2A).